Reading from the N-terminus, the 63-residue chain is Bowman-Birk type proteinase inhibitor B-II (63 aa).

7 disulfide bridges follow: cysteine 5/cysteine 62, cysteine 6/cysteine 23, cysteine 9/cysteine 57, cysteine 11/cysteine 21, cysteine 30/cysteine 37, cysteine 34/cysteine 49, and cysteine 39/cysteine 47.

The protein belongs to the Bowman-Birk serine protease inhibitor family.

The chain is Bowman-Birk type proteinase inhibitor B-II from Arachis hypogaea (Peanut).